The chain runs to 503 residues: Probable DNA double-strand break repair helicase HerA (503 aa).

ATP-binding positions include arginine 122, 131–136 (GGGKSN), and 478–479 (KI).

Belongs to the HerA family.

The enzyme catalyses Couples ATP hydrolysis with the unwinding of duplex DNA at the replication fork by translocating in the 5'-3' direction. This creates two antiparallel DNA single strands (ssDNA). The leading ssDNA polymer is the template for DNA polymerase III holoenzyme which synthesizes a continuous strand.. The catalysed reaction is ATP + H2O = ADP + phosphate + H(+). It catalyses the reaction Couples ATP hydrolysis with the unwinding of duplex DNA by translocating in the 3'-5' direction.. Involved in DNA double-strand break (DSB) repair. Probably acts with NurA to stimulate resection of the 5' strand and produce the long 3' single-strand that is required for RadA loading. Has DNA-dependent ATPase activity and DNA helicase activity. This is Probable DNA double-strand break repair helicase HerA from Methanocaldococcus jannaschii (strain ATCC 43067 / DSM 2661 / JAL-1 / JCM 10045 / NBRC 100440) (Methanococcus jannaschii).